The following is a 252-amino-acid chain: Ribosomal RNA small subunit methyltransferase J (252 aa).

S-adenosyl-L-methionine-binding positions include arginine 101–aspartate 102, glutamate 117–arginine 118, serine 153–serine 154, and aspartate 171.

Belongs to the methyltransferase superfamily. RsmJ family.

It localises to the cytoplasm. It catalyses the reaction guanosine(1516) in 16S rRNA + S-adenosyl-L-methionine = N(2)-methylguanosine(1516) in 16S rRNA + S-adenosyl-L-homocysteine + H(+). Functionally, specifically methylates the guanosine in position 1516 of 16S rRNA. The polypeptide is Ribosomal RNA small subunit methyltransferase J (Pseudoalteromonas translucida (strain TAC 125)).